The sequence spans 547 residues: CTP synthase (547 aa).

An amidoligase domain region spans residues Met1–Ile265. Ser13 provides a ligand contact to CTP. Ser13 contributes to the UTP binding site. ATP contacts are provided by residues Ser14–Leu19 and Asp71. Positions 71 and 139 each coordinate Mg(2+). CTP is bound by residues Asp146–Glu148, Lys186–Gln191, and Lys222. UTP is bound by residues Lys186–Gln191 and Lys222. A Glutamine amidotransferase type-1 domain is found at Lys291–Leu546. Position 353 (Gly353) interacts with L-glutamine. The active-site Nucleophile; for glutamine hydrolysis is Cys380. L-glutamine-binding positions include Leu381–Gln384, Glu404, and Arg474. Catalysis depends on residues His519 and Glu521.

It belongs to the CTP synthase family. In terms of assembly, homotetramer.

The enzyme catalyses UTP + L-glutamine + ATP + H2O = CTP + L-glutamate + ADP + phosphate + 2 H(+). The catalysed reaction is L-glutamine + H2O = L-glutamate + NH4(+). It carries out the reaction UTP + NH4(+) + ATP = CTP + ADP + phosphate + 2 H(+). Its pathway is pyrimidine metabolism; CTP biosynthesis via de novo pathway; CTP from UDP: step 2/2. Its activity is regulated as follows. Allosterically activated by GTP, when glutamine is the substrate; GTP has no effect on the reaction when ammonia is the substrate. The allosteric effector GTP functions by stabilizing the protein conformation that binds the tetrahedral intermediate(s) formed during glutamine hydrolysis. Inhibited by the product CTP, via allosteric rather than competitive inhibition. In terms of biological role, catalyzes the ATP-dependent amination of UTP to CTP with either L-glutamine or ammonia as the source of nitrogen. Regulates intracellular CTP levels through interactions with the four ribonucleotide triphosphates. The polypeptide is CTP synthase (Roseobacter denitrificans (strain ATCC 33942 / OCh 114) (Erythrobacter sp. (strain OCh 114))).